A 341-amino-acid chain; its full sequence is Tryptophan--tRNA ligase (341 aa).

Residues 11-13 and 19-20 each bind ATP; these read RPT and GH. Positions 12–20 match the 'HIGH' region motif; it reads PTGKLHIGH. An L-tryptophan-binding site is contributed by aspartate 140. ATP-binding positions include 152 to 154, leucine 194, and 202 to 206; these read GND and KMSKS. Residues 202–206 carry the 'KMSKS' region motif; it reads KMSKS.

This sequence belongs to the class-I aminoacyl-tRNA synthetase family. In terms of assembly, homodimer.

The protein localises to the cytoplasm. The enzyme catalyses tRNA(Trp) + L-tryptophan + ATP = L-tryptophyl-tRNA(Trp) + AMP + diphosphate + H(+). Catalyzes the attachment of tryptophan to tRNA(Trp). This chain is Tryptophan--tRNA ligase, found in Lactococcus lactis subsp. lactis (strain IL1403) (Streptococcus lactis).